Consider the following 457-residue polypeptide: C4-dicarboxylate transport protein (457 aa).

Helical transmembrane passes span 20-42 (LYFQ…PAFA), 51-73 (AFIK…TGIA), 88-110 (AMAY…AHVV), 138-158 (LTLV…AFTG), 166-188 (LTGP…LALV), 212-234 (ILMR…KYGV), and 241-263 (AWLV…GLVS).

This sequence belongs to the dicarboxylate/amino acid:cation symporter (DAACS) (TC 2.A.23) family.

The protein resides in the cell inner membrane. In terms of biological role, responsible for the transport of dicarboxylates such as succinate, fumarate, and malate from the periplasm across the membrane. This is C4-dicarboxylate transport protein from Xanthomonas axonopodis pv. citri (strain 306).